An 857-amino-acid chain; its full sequence is Autoinducer 2 sensor kinase/phosphatase LuxQ (857 aa).

2 helical membrane passes run 20–40 (IIFL…YYFS) and 283–303 (LGLA…RSWI). A Histidine kinase domain is found at 490-712 (KMSHEIRTPL…TFYLSIPVEK (223 aa)). The residue at position 493 (His-493) is a Phosphohistidine; by autocatalysis. The region spanning 735 to 850 (KVLLVEDNHT…ELHDELLHFK (116 aa)) is the Response regulatory domain. Asp-784 is subject to 4-aspartylphosphate.

Binds the complex formed by the autoinducer and LuxP.

The protein resides in the cell inner membrane. It catalyses the reaction ATP + protein L-histidine = ADP + protein N-phospho-L-histidine.. At low cell density, in absence of autoinducer has a kinase activity, and autophosphorylates on a histidine residue. The phosphoryl group is then transferred to an aspartate residue in the response regulator domain. The phosphoryl group is transferred to LuxU, and ultimately to LuxO. At high cell density, in the presence of autoinducer, the kinase activity is inactivated, and the response regulator domain has a phosphatase activity. This chain is Autoinducer 2 sensor kinase/phosphatase LuxQ (luxQ), found in Vibrio vulnificus (strain CMCP6).